We begin with the raw amino-acid sequence, 239 residues long: Uridylate kinase (239 aa).

12 to 15 (KLSG) contributes to the ATP binding site. UMP is bound at residue G53. Residues G54 and R58 each contribute to the ATP site. UMP-binding positions include D73 and 135–142 (TGSPCFTT). ATP contacts are provided by T162, Y168, and D171.

This sequence belongs to the UMP kinase family. As to quaternary structure, homohexamer.

It is found in the cytoplasm. It carries out the reaction UMP + ATP = UDP + ADP. It functions in the pathway pyrimidine metabolism; CTP biosynthesis via de novo pathway; UDP from UMP (UMPK route): step 1/1. Its activity is regulated as follows. Inhibited by UTP. Catalyzes the reversible phosphorylation of UMP to UDP. This Ruthia magnifica subsp. Calyptogena magnifica protein is Uridylate kinase.